We begin with the raw amino-acid sequence, 261 residues long: HTH-type transcriptional repressor CsqR (261 aa).

One can recognise an HTH deoR-type domain in the interval 8–63; that stretch reads GNPRHDQLLMLIAERGYMNIDELANLLDVSTQTVRRDIRKLSEQGLITRHHGGAGR. Positions 25-44 form a DNA-binding region, H-T-H motif; sequence MNIDELANLLDVSTQTVRRD.

Monomer in the absence of DNA. Exhibits a high level of cooperativity once it is bound to its target DNA.

With respect to regulation, inactivated in the presence of the effectors sulfoquinovose and sulfoquinovosyl glycerol, leading to the de-repression of the target genes. Involved in the regulation of the sulfoquinovose operon. Represses the expression of the yihUTS operon and of the yihV and csqR genes. Binds DNA inside the spacer between the bidirectional transcription units comprising the yihUTS operon and the yihV gene, and upstream the csqR gene itself. This Escherichia coli (strain K12) protein is HTH-type transcriptional repressor CsqR.